Here is a 361-residue protein sequence, read N- to C-terminus: Peptide chain release factor 1 (361 aa).

Position 235 is an N5-methylglutamine (Gln-235). The disordered stretch occupies residues 286 to 305 (IDSARSAERKQKVGSGDRSE).

The protein belongs to the prokaryotic/mitochondrial release factor family. Post-translationally, methylated by PrmC. Methylation increases the termination efficiency of RF1.

It is found in the cytoplasm. In terms of biological role, peptide chain release factor 1 directs the termination of translation in response to the peptide chain termination codons UAG and UAA. The sequence is that of Peptide chain release factor 1 from Rhodopseudomonas palustris (strain HaA2).